A 216-amino-acid chain; its full sequence is GTP cyclohydrolase 1 (216 aa).

3 residues coordinate Zn(2+): C108, H111, and C179.

The protein belongs to the GTP cyclohydrolase I family. As to quaternary structure, homomer.

The enzyme catalyses GTP + H2O = 7,8-dihydroneopterin 3'-triphosphate + formate + H(+). The protein operates within cofactor biosynthesis; 7,8-dihydroneopterin triphosphate biosynthesis; 7,8-dihydroneopterin triphosphate from GTP: step 1/1. This Shewanella baltica (strain OS223) protein is GTP cyclohydrolase 1.